Here is a 546-residue protein sequence, read N- to C-terminus: DDB1- and CUL4-associated factor 11 (546 aa).

Residues 1–10 (MGSRNSSSAG) are compositionally biased toward polar residues. The disordered stretch occupies residues 1–40 (MGSRNSSSAGTGSGDPSEGLPRRGAGLRRSEEEEEEDEDV). Ser73 and Ser75 each carry phosphoserine. The interval 79–100 (HDSAWDGRLGDRYNPPVDATPD) is disordered. Residues 80 to 89 (DSAWDGRLGD) show a composition bias toward basic and acidic residues. WD repeat units follow at residues 170–210 (TYSQ…RKFK), 216–258 (DVGW…TALD), 263–302 (ERRFAVFSIAVSSDGREVLGGANDGCLYVFDREQNRRTLQ), 305–345 (SHED…EDDP), 353–392 (GHQDGITFIDSKGDARYLISNSKDQTIKLWDIRRFSSREG), 435–480 (GVLH…KKLT), and 481–520 (THKACVRDVSWHPFEEKIVSSSWDGNLRLWQYRQAEYFQD). The tract at residues 521–546 (DMPESEEHPSTPAPMSHPSTAFSSPQ) is disordered. Positions 537–546 (HPSTAFSSPQ) are enriched in polar residues.

Interacts with DDB1 and CUL4A.

Its pathway is protein modification; protein ubiquitination. Its function is as follows. May function as a substrate receptor for CUL4-DDB1 E3 ubiquitin-protein ligase complex. This chain is DDB1- and CUL4-associated factor 11 (DCAF11), found in Bos taurus (Bovine).